The primary structure comprises 203 residues: SPbeta prophage-derived uncharacterized lipoprotein YonS (203 aa).

A signal peptide spans 1-21 (MKLFKKLGILLLITSLILLAA). A lipid anchor (N-palmitoyl cysteine) is attached at Cys22. Cys22 carries S-diacylglycerol cysteine lipidation. The span at 27 to 46 (ESSSSSEDTNNATDTNTSES) shows a compositional bias: low complexity. The segment at 27–57 (ESSSSSEDTNNATDTNTSESQDISVNGPEKV) is disordered.

The protein localises to the cell membrane. The polypeptide is SPbeta prophage-derived uncharacterized lipoprotein YonS (yonS) (Bacillus subtilis (strain 168)).